The following is an 837-amino-acid chain: A disintegrin and metalloproteinase with thrombospondin motifs 4 (837 aa).

The signal sequence occupies residues 1-51; the sequence is MSQTGSHPGRGLAGRWLWGAQPCLLLPIVPLSWLVWLLLLLLASLLPSARL. A propeptide spanning residues 52 to 212 is cleaved from the precursor; that stretch reads ASPLPREEEI…PSPRPRRAKR (161 aa). Asn68 carries an N-linked (GlcNAc...) asparagine glycan. The disordered stretch occupies residues 166 to 191; that stretch reads EGGTPNSAGGPGAHILRRKSPASGQG. The short motif at 192 to 199 is the Cysteine switch element; that stretch reads PMCNVKAP. Cys194 lines the Zn(2+) pocket. The region spanning 218-428 is the Peptidase M12B domain; that stretch reads RFVETLVVAD…GYGHCLLDKP (211 aa). Intrachain disulfides connect Cys293-Cys345, Cys322-Cys327, Cys339-Cys423, Cys377-Cys407, Cys449-Cys472, Cys460-Cys482, Cys467-Cys501, Cys495-Cys506, Cys532-Cys569, Cys536-Cys574, and Cys547-Cys559. A Zn(2+)-binding site is contributed by His361. Glu362 is an active-site residue. Zn(2+) is bound by residues His365 and His371. The region spanning 437–519 is the Disintegrin domain; the sequence is TFPGKDYDAD…DQLQDFNIPQ (83 aa). Residues 520–575 form the TSP type-1 domain; it reads AGGWGPWGPWGDCSRTCGGGVQFSSRDCTRPVPRNGGKYCEGRRTRFRSCNTEDCP. The spacer stretch occupies residues 686-837; it reads SKQSGSFRKF…LRRRPWVGRK (152 aa).

Interacts with SRPX2. Requires Zn(2+) as cofactor. In terms of processing, the precursor is cleaved by a furin endopeptidase. Post-translationally, glycosylated. Can be O-fucosylated by POFUT2 on a serine or a threonine residue found within the consensus sequence C1-X(2)-(S/T)-C2-G of the TSP type-1 repeat domains where C1 and C2 are the first and second cysteine residue of the repeat, respectively. Fucosylated repeats can then be further glycosylated by the addition of a beta-1,3-glucose residue by the glucosyltransferase, B3GALTL. Fucosylation mediates the efficient secretion of ADAMTS family members. Can also be C-glycosylated with one or two mannose molecules on tryptophan residues within the consensus sequence W-X-X-W of the TPRs, and N-glycosylated. These other glycosylations can also facilitate secretion.

It is found in the secreted. The protein resides in the extracellular space. It localises to the extracellular matrix. The catalysed reaction is Glutamyl endopeptidase. Bonds cleaved include 370-Thr-Glu-Gly-Glu-|-Ala-Arg-Gly-Ser-377 in the interglobular domain of mammalian aggrecan.. In terms of biological role, cleaves aggrecan, a cartilage proteoglycan, at the '392-Glu-|-Ala-393' site and may be involved in its turnover. Also cleaves COMP. May play an important role in the destruction of aggrecan in arthritic diseases. This chain is A disintegrin and metalloproteinase with thrombospondin motifs 4 (ADAMTS4), found in Pongo abelii (Sumatran orangutan).